The sequence spans 100 residues: MHLSPQEKDKLLIFSAAQLAERRLNRGLKLNYPETVAFLSFQVLEGARDGKSVSQLMSEGTTWLSKKQVMDGISEMVDEVQVEAVFPDGTKLVTIHNPIN.

The protein belongs to the urease gamma subunit family. As to quaternary structure, heterotrimer of UreA (gamma), UreB (beta) and UreC (alpha) subunits. Three heterotrimers associate to form the active enzyme.

Its subcellular location is the cytoplasm. The enzyme catalyses urea + 2 H2O + H(+) = hydrogencarbonate + 2 NH4(+). Its pathway is nitrogen metabolism; urea degradation; CO(2) and NH(3) from urea (urease route): step 1/1. The sequence is that of Urease subunit gamma from Prochlorococcus marinus subsp. pastoris (strain CCMP1986 / NIES-2087 / MED4).